We begin with the raw amino-acid sequence, 436 residues long: 3-ketoacyl-CoA thiolase (436 aa).

The active-site Acyl-thioester intermediate is Cys-99. Catalysis depends on proton acceptor residues His-392 and Cys-422.

The protein belongs to the thiolase-like superfamily. Thiolase family. In terms of assembly, heterotetramer of two alpha chains (FadJ) and two beta chains (FadI).

The protein resides in the cytoplasm. The catalysed reaction is an acyl-CoA + acetyl-CoA = a 3-oxoacyl-CoA + CoA. It functions in the pathway lipid metabolism; fatty acid beta-oxidation. Its function is as follows. Catalyzes the final step of fatty acid oxidation in which acetyl-CoA is released and the CoA ester of a fatty acid two carbons shorter is formed. This is 3-ketoacyl-CoA thiolase from Shewanella piezotolerans (strain WP3 / JCM 13877).